The primary structure comprises 133 residues: Fluoride-specific ion channel FluC (133 aa).

4 helical membrane passes run Ala-3–Leu-23, Trp-41–Val-61, Ile-76–Phe-96, and Leu-103–Gly-123. Na(+)-binding residues include Gly-81 and Thr-84.

Belongs to the fluoride channel Fluc/FEX (TC 1.A.43) family.

The protein resides in the cell inner membrane. The enzyme catalyses fluoride(in) = fluoride(out). With respect to regulation, na(+) is not transported, but it plays an essential structural role and its presence is essential for fluoride channel function. Functionally, fluoride-specific ion channel. Important for reducing fluoride concentration in the cell, thus reducing its toxicity. The protein is Fluoride-specific ion channel FluC of Xylella fastidiosa (strain M23).